A 61-amino-acid chain; its full sequence is Large ribosomal subunit protein bL32 (61 aa).

It belongs to the bacterial ribosomal protein bL32 family.

This is Large ribosomal subunit protein bL32 from Acidithiobacillus ferrooxidans (strain ATCC 23270 / DSM 14882 / CIP 104768 / NCIMB 8455) (Ferrobacillus ferrooxidans (strain ATCC 23270)).